The following is a 334-amino-acid chain: Leucine carboxyl methyltransferase 1 (334 aa).

Residues K37, R73, G98, D122, 171-172 (DL), and E198 each bind S-adenosyl-L-methionine.

Belongs to the methyltransferase superfamily. LCMT family.

The catalysed reaction is [phosphatase 2A protein]-C-terminal L-leucine + S-adenosyl-L-methionine = [phosphatase 2A protein]-C-terminal L-leucine methyl ester + S-adenosyl-L-homocysteine. Methylates the carboxyl group of the C-terminal leucine residue of protein phosphatase 2A catalytic subunits to form alpha-leucine ester residues. In Homo sapiens (Human), this protein is Leucine carboxyl methyltransferase 1 (LCMT1).